The chain runs to 167 residues: Phospholipase A2 (167 aa).

Residues W38, G40, and G42 each coordinate Ca(2+). 5 disulfides stabilise this stretch: C39–C61, C60–C99, C67–C92, C90–C127, and C132–C144. Residue N47 is glycosylated (N-linked (GlcNAc...) asparagine). Residue H64 is part of the active site. D65 provides a ligand contact to Ca(2+). A propeptide spanning residues 136–140 is cleaved from the precursor; it reads ARSAR.

It belongs to the phospholipase A2 family. Group III subfamily. In terms of assembly, heterodimer composed of a large subunit and a small subunit; disulfide-linked. The cofactor is Ca(2+). Expressed by the venom gland.

The protein localises to the secreted. It catalyses the reaction a 1,2-diacyl-sn-glycero-3-phosphocholine + H2O = a 1-acyl-sn-glycero-3-phosphocholine + a fatty acid + H(+). Phospholipase toxin, which catalyzes the calcium-dependent hydrolysis of the 2-acyl groups in 3-sn-phosphoglycerides. Inhibits both skeletal (RYR1) and cardiac (RYR2) ryanodine receptors (calcium release channels). Probably blocks ryanodine receptors by generating a lipid product. Shows hemolytic activity, but it is not know if it is direct or indirect. In Hottentotta tamulus (Eastern Indian scorpion), this protein is Phospholipase A2.